The sequence spans 157 residues: uncharacterized protein (157 aa).

The helical transmembrane segment at 42–64 threads the bilayer; sequence SCIRLIVMFICVAMITCPNSLRF.

The protein resides in the membrane. This is an uncharacterized protein from Saccharomyces cerevisiae (strain ATCC 204508 / S288c) (Baker's yeast).